Reading from the N-terminus, the 886-residue chain is Alanine--tRNA ligase (886 aa).

Residues His564, His568, Cys676, and His680 each coordinate Zn(2+).

It belongs to the class-II aminoacyl-tRNA synthetase family. Zn(2+) is required as a cofactor.

It localises to the cytoplasm. The catalysed reaction is tRNA(Ala) + L-alanine + ATP = L-alanyl-tRNA(Ala) + AMP + diphosphate. Catalyzes the attachment of alanine to tRNA(Ala) in a two-step reaction: alanine is first activated by ATP to form Ala-AMP and then transferred to the acceptor end of tRNA(Ala). Also edits incorrectly charged Ser-tRNA(Ala) and Gly-tRNA(Ala) via its editing domain. The chain is Alanine--tRNA ligase from Bartonella bacilliformis (strain ATCC 35685 / KC583 / Herrer 020/F12,63).